The chain runs to 56 residues: Bowman-Birk type proteinase inhibitor I-2B (56 aa).

4 disulfide bridges follow: cysteine 10/cysteine 25, cysteine 15/cysteine 23, cysteine 32/cysteine 39, and cysteine 36/cysteine 51.

The protein belongs to the Bowman-Birk serine protease inhibitor family.

The protein is Bowman-Birk type proteinase inhibitor I-2B of Triticum aestivum (Wheat).